The sequence spans 424 residues: Zinc finger protein 597 (424 aa).

In terms of domain architecture, KRAB spans isoleucine 14–proline 88. 4 consecutive C2H2-type zinc fingers follow at residues tyrosine 156 to histidine 178, histidine 184 to histidine 206, tyrosine 212 to histidine 234, and tyrosine 240 to histidine 262. Lysine 300 participates in a covalent cross-link: Glycyl lysine isopeptide (Lys-Gly) (interchain with G-Cter in SUMO2). C2H2-type zinc fingers lie at residues leucine 341 to histidine 363, histidine 369 to histidine 391, and phenylalanine 397 to histidine 419.

This sequence belongs to the krueppel C2H2-type zinc-finger protein family.

The protein localises to the nucleus. Its function is as follows. May be involved in transcriptional regulation. This chain is Zinc finger protein 597 (ZNF597), found in Homo sapiens (Human).